The primary structure comprises 763 residues: Forkhead box protein M1 (763 aa).

The segment at 1–53 (MKTSPRRPLILKRRRLPLPVQNAPSETSEEEPKRSPAQQESNQAEASKEVAES) is disordered. The span at 36-45 (PAQQESNQAE) shows a compositional bias: polar residues. Residues Lys-163, Lys-201, and Lys-325 each participate in a glycyl lysine isopeptide (Lys-Gly) (interchain with G-Cter in SUMO2) cross-link. The segment at 198–232 (RSIKQEMEEKENCHLEQRQVKVEEPSRPSASWQNS) is disordered. Over residues 200–223 (IKQEMEEKENCHLEQRQVKVEEPS) the composition is skewed to basic and acidic residues. Residues 235 to 327 (ERPPYSYMAM…LTLDQVFKPL (93 aa)) constitute a DNA-binding region (fork-head). Residues 329 to 351 (PGSPQLPEHLESQQKRPNPELRR) are disordered. At Ser-331 the chain carries Phosphoserine. Residues 336 to 351 (EHLESQQKRPNPELRR) are compositionally biased toward basic and acidic residues. Lys-356 participates in a covalent cross-link: Glycyl lysine isopeptide (Lys-Gly) (interchain with G-Cter in SUMO2). Ser-376 bears the Phosphoserine; by CHEK2 mark. Glycyl lysine isopeptide (Lys-Gly) (interchain with G-Cter in SUMO2) cross-links involve residues Lys-422 and Lys-440. Residues 482–711 (PPLEEWPSPA…PGSPEPQVSG (230 aa)) are disordered. Ser-489 is subject to Phosphoserine; by GSK3. Over residues 494-503 (FKEESSHSWE) the composition is skewed to basic and acidic residues. The residue at position 522 (Ser-522) is a Phosphoserine. The segment covering 583–592 (DPASQLSYSQ) has biased composition (polar residues). Phosphothreonine; by CDK1 is present on Thr-611. Phosphothreonine is present on residues Thr-620, Thr-627, and Thr-662. The residue at position 693 (Ser-693) is a Phosphoserine; by CDK1. 2 positions are modified to phosphoserine; by PLK1: Ser-730 and Ser-739.

As to quaternary structure, interacts with PINT87aa which is encoded by the circular form of the long non-coding RNA LINC-PINT; the interaction inhibits FOXM1-mediated transcription of PHB2. In terms of processing, phosphorylated in M (mitotic) phase. Phosphorylation by the checkpoint kinase CHEK2 in response to DNA damage increases the FOXM1 protein stability probably stimulating the transcription of genes involved in DNA repair. Phosphorylated by CDK1 in late S and G2 phases, creating docking sites for the POLO box domains of PLK1. Subsequently, PLK1 binds and phosphorylates FOXM1, leading to activation of transcriptional activity and subsequent enhanced expression of key mitotic regulators. Phosphorylated by GSK3B leading to ubiquitination and proteasomal degradation. Post-translationally, ubiquitinated in a FBXW7-dependent manner leading to proteasomal degradation. Expressed in thymus, testis, small intestine, colon followed by ovary. Appears to be expressed only in adult organs containing proliferating/cycling cells or in response to growth factors. Also expressed in epithelial cell lines derived from tumors. Not expressed in resting cells. Isoform 2 is highly expressed in testis.

The protein localises to the nucleus. In terms of biological role, transcription factor regulating the expression of cell cycle genes essential for DNA replication and mitosis. Plays a role in the control of cell proliferation. Also plays a role in DNA break repair, participating in the DNA damage checkpoint response. Promotes transcription of PHB2. This chain is Forkhead box protein M1 (FOXM1), found in Homo sapiens (Human).